Here is a 291-residue protein sequence, read N- to C-terminus: uncharacterized protein (291 aa).

2 disordered regions span residues 29 to 50 and 168 to 291; these read SEKPVGAPPASQIPGLSDLRDS and RKVK…AELK. Ser-50 carries the phosphoserine modification. 2 stretches are compositionally biased toward polar residues: residues 176–186 and 205–217; these read NSKNPSKTGTP and QKNSSPTNFSKLI. The segment covering 221-237 has biased composition (basic and acidic residues); sequence YKDEWLQQQKAEADRRT. Residues 280-291 are compositionally biased toward polar residues; sequence SSPSESTPAELK.

This is an uncharacterized protein from Mus musculus (Mouse).